Consider the following 299-residue polypeptide: Large ribosomal subunit protein uL18 (299 aa).

The protein belongs to the universal ribosomal protein uL18 family. In terms of assembly, component of the large ribosomal subunit (LSU).

The protein localises to the cytoplasm. The protein resides in the nucleus. Functionally, component of the ribosome, a large ribonucleoprotein complex responsible for the synthesis of proteins in the cell. The small ribosomal subunit (SSU) binds messenger RNAs (mRNAs) and translates the encoded message by selecting cognate aminoacyl-transfer RNA (tRNA) molecules. The large subunit (LSU) contains the ribosomal catalytic site termed the peptidyl transferase center (PTC), which catalyzes the formation of peptide bonds, thereby polymerizing the amino acids delivered by tRNAs into a polypeptide chain. The nascent polypeptides leave the ribosome through a tunnel in the LSU and interact with protein factors that function in enzymatic processing, targeting, and the membrane insertion of nascent chains at the exit of the ribosomal tunnel. The protein is Large ribosomal subunit protein uL18 (RpL5) of Bombyx mori (Silk moth).